The following is a 242-amino-acid chain: Methylthioribulose-1-phosphate dehydratase (242 aa).

The tract at residues 1-22 (MAAASGHGLELANGGDATQDKL) is disordered. Cysteine 97 is a binding site for substrate. 2 residues coordinate Zn(2+): histidine 115 and histidine 117. Catalysis depends on glutamate 139, which acts as the Proton donor/acceptor. Histidine 195 is a Zn(2+) binding site.

It belongs to the aldolase class II family. MtnB subfamily. Requires Zn(2+) as cofactor.

It localises to the cytoplasm. The catalysed reaction is 5-(methylsulfanyl)-D-ribulose 1-phosphate = 5-methylsulfanyl-2,3-dioxopentyl phosphate + H2O. It participates in amino-acid biosynthesis; L-methionine biosynthesis via salvage pathway; L-methionine from S-methyl-5-thio-alpha-D-ribose 1-phosphate: step 2/6. Its function is as follows. Catalyzes the dehydration of methylthioribulose-1-phosphate (MTRu-1-P) into 2,3-diketo-5-methylthiopentyl-1-phosphate (DK-MTP-1-P). Functions in the methionine salvage pathway. May play a role in apoptosis. In Gallus gallus (Chicken), this protein is Methylthioribulose-1-phosphate dehydratase.